A 441-amino-acid chain; its full sequence is Protein translocase subunit SecY (441 aa).

10 helical membrane-spanning segments follow: residues 25-45, 78-98, 126-146, 155-175, 184-204, 218-238, 275-295, 318-338, 376-396, and 398-418; these read YFVIFSLIVFRMGSYIPIPGI, IFALGIMPFISSSIIVQILTL, LILAALQSFGMSISLPNIPGL, ISFYGIAIISLITGTIFLMWL, IGNGISIIIFSGIVSGLPSSF, VLLFCFIGIVIFLVTLLVVYI, VIPAIFASSIVLFPATIASWF, YILTYITAIIFFCFFYTGLAF, FLGSMYMAFICLVPELMRFFM, and VPFYFGGTSLLIIVVVIIDFI.

This sequence belongs to the SecY/SEC61-alpha family. As to quaternary structure, component of the Sec protein translocase complex. Heterotrimer consisting of SecY, SecE and SecG subunits. The heterotrimers can form oligomers, although 1 heterotrimer is thought to be able to translocate proteins. Interacts with the ribosome. Interacts with SecDF, and other proteins may be involved. Interacts with SecA.

It is found in the cell membrane. Functionally, the central subunit of the protein translocation channel SecYEG. Consists of two halves formed by TMs 1-5 and 6-10. These two domains form a lateral gate at the front which open onto the bilayer between TMs 2 and 7, and are clamped together by SecE at the back. The channel is closed by both a pore ring composed of hydrophobic SecY resides and a short helix (helix 2A) on the extracellular side of the membrane which forms a plug. The plug probably moves laterally to allow the channel to open. The ring and the pore may move independently. The sequence is that of Protein translocase subunit SecY from Buchnera aphidicola subsp. Baizongia pistaciae (strain Bp).